We begin with the raw amino-acid sequence, 500 residues long: Probable cytosol aminopeptidase (500 aa).

K264 and D269 together coordinate Mn(2+). The active site involves K276. The Mn(2+) site is built by D287, D346, and E348. R350 is an active-site residue.

It belongs to the peptidase M17 family. Mn(2+) serves as cofactor.

It is found in the cytoplasm. It carries out the reaction Release of an N-terminal amino acid, Xaa-|-Yaa-, in which Xaa is preferably Leu, but may be other amino acids including Pro although not Arg or Lys, and Yaa may be Pro. Amino acid amides and methyl esters are also readily hydrolyzed, but rates on arylamides are exceedingly low.. The enzyme catalyses Release of an N-terminal amino acid, preferentially leucine, but not glutamic or aspartic acids.. Functionally, presumably involved in the processing and regular turnover of intracellular proteins. Catalyzes the removal of unsubstituted N-terminal amino acids from various peptides. This Rickettsia canadensis (strain McKiel) protein is Probable cytosol aminopeptidase.